Consider the following 322-residue polypeptide: Ferrochelatase (322 aa).

Positions 194 and 275 each coordinate Fe cation.

The protein belongs to the ferrochelatase family.

The protein localises to the cytoplasm. It catalyses the reaction heme b + 2 H(+) = protoporphyrin IX + Fe(2+). It participates in porphyrin-containing compound metabolism; protoheme biosynthesis; protoheme from protoporphyrin-IX: step 1/1. Catalyzes the ferrous insertion into protoporphyrin IX. The polypeptide is Ferrochelatase (Yersinia enterocolitica serotype O:8 / biotype 1B (strain NCTC 13174 / 8081)).